A 560-amino-acid chain; its full sequence is DNA ligase B (560 aa).

Lys-124 serves as the catalytic N6-AMP-lysine intermediate.

Belongs to the NAD-dependent DNA ligase family. LigB subfamily.

The enzyme catalyses NAD(+) + (deoxyribonucleotide)n-3'-hydroxyl + 5'-phospho-(deoxyribonucleotide)m = (deoxyribonucleotide)n+m + AMP + beta-nicotinamide D-nucleotide.. Functionally, catalyzes the formation of phosphodiester linkages between 5'-phosphoryl and 3'-hydroxyl groups in double-stranded DNA using NAD as a coenzyme and as the energy source for the reaction. The sequence is that of DNA ligase B from Shigella sonnei (strain Ss046).